The following is a 332-amino-acid chain: Azadirone synthase LFS (332 aa).

The 106-residue stretch at A181 to P286 folds into the Fe2OG dioxygenase domain. Residues H208, D210, and H269 each coordinate Fe cation. R277 is a 2-oxoglutarate binding site.

Belongs to the iron/ascorbate-dependent oxidoreductase family. Fe(2+) serves as cofactor. In terms of tissue distribution, mainly expressed in petioles and, to a lower extent, in roots.

It catalyses the reaction (1S,3bR,4R,5aR,9aR,9bR,11aS)-1-(1-hydroxy-4-oxobutan-2-yl)-3b,6,6,9a,11a-pentamethyl-7-oxo-1H,2H,3bH,4H,5H,5aH,6H,7H,9aH,9bH,10H,11H,11aH-cyclopenta[a]phenanthren-4-yl acetate + 2-oxoglutarate + O2 = azadirone + succinate + CO2 + 2 H2O. It participates in secondary metabolite biosynthesis; terpenoid biosynthesis. Its function is as follows. 2-oxoglutarate-Fe(II) type oxidoreductase involved in the biosynthesis of limonoids triterpene natural products such as azadirachtin, an antifeedant widely used as bioinsecticide, and possessing many medicinal applications including anti-tumoral, anti-malarial, anti-rheumatic, antibacterial, anti-inflammatory, anti-pyretic and diuretic effects. Catalyzes the formation of azadirone. In Melia azedarach (Chinaberry tree), this protein is Azadirone synthase LFS.